The sequence spans 348 residues: Dihydroorotase (348 aa).

Positions 17 and 19 each coordinate Zn(2+). Substrate-binding positions include 19–21 (HLR) and asparagine 45. 3 residues coordinate Zn(2+): lysine 103, histidine 140, and histidine 178. N6-carboxylysine is present on lysine 103. Substrate is bound at residue histidine 140. Leucine 223 serves as a coordination point for substrate. Aspartate 251 provides a ligand contact to Zn(2+). Residue aspartate 251 is part of the active site. The substrate site is built by histidine 255 and alanine 267.

This sequence belongs to the metallo-dependent hydrolases superfamily. DHOase family. Class II DHOase subfamily. In terms of assembly, homodimer. The cofactor is Zn(2+).

It carries out the reaction (S)-dihydroorotate + H2O = N-carbamoyl-L-aspartate + H(+). Its pathway is pyrimidine metabolism; UMP biosynthesis via de novo pathway; (S)-dihydroorotate from bicarbonate: step 3/3. Catalyzes the reversible cyclization of carbamoyl aspartate to dihydroorotate. In Escherichia fergusonii (strain ATCC 35469 / DSM 13698 / CCUG 18766 / IAM 14443 / JCM 21226 / LMG 7866 / NBRC 102419 / NCTC 12128 / CDC 0568-73), this protein is Dihydroorotase.